A 70-amino-acid polypeptide reads, in one-letter code: Large ribosomal subunit protein bL31 (70 aa).

Residues Cys16, Cys18, Cys37, and Cys40 each coordinate Zn(2+).

It belongs to the bacterial ribosomal protein bL31 family. Type A subfamily. As to quaternary structure, part of the 50S ribosomal subunit. Zn(2+) serves as cofactor.

Binds the 23S rRNA. The chain is Large ribosomal subunit protein bL31 from Shewanella amazonensis (strain ATCC BAA-1098 / SB2B).